The sequence spans 408 residues: Serine/threonine transporter SstT (408 aa).

Transmembrane regions (helical) follow at residues 11–31 (LANGSLVLQILVGIIAGVALA), 43–63 (FLGSLFVGALKAIAPILVFIL), 82–102 (IVVLYLLGTFAAALTAVILSM), 141–161 (ALMTGNYIGILAWGVGLGLAL), 192–212 (IGIFGLVAATFAETGFAAIAG), 216–236 (LLAVLLGAMAFIALIINPLIV), 290–310 (IPLGATINMGGAAITITVLTL), 316–336 (LGIQVDLLTALLLSVVAAISA), and 363–383 (VAMQVVAVGFIIGVIQDAAET).

Belongs to the dicarboxylate/amino acid:cation symporter (DAACS) (TC 2.A.23) family.

The protein localises to the cell inner membrane. It catalyses the reaction L-serine(in) + Na(+)(in) = L-serine(out) + Na(+)(out). The catalysed reaction is L-threonine(in) + Na(+)(in) = L-threonine(out) + Na(+)(out). In terms of biological role, involved in the import of serine and threonine into the cell, with the concomitant import of sodium (symport system). This is Serine/threonine transporter SstT from Shewanella oneidensis (strain ATCC 700550 / JCM 31522 / CIP 106686 / LMG 19005 / NCIMB 14063 / MR-1).